The following is a 324-amino-acid chain: Taste receptor type 2 member 116 (324 aa).

The Extracellular portion of the chain corresponds to 1–2 (MN). The chain crosses the membrane as a helical span at residues 3–23 (GVLYITFTVILSVEVIIGNFG). The Cytoplasmic portion of the chain corresponds to 24–55 (NGIIALVNIMDLAKRRKISSVDQILTALAISR). A helical membrane pass occupies residues 56–76 (IVLLWLVLVSWWLSMFYPGQW). Residues 77 to 94 (MTEGIDVIVHNVWTTLNQ) lie on the Extracellular side of the membrane. The helical transmembrane segment at 95-115 (ISLWLATSFSVFCFLKVANFS) threads the bilayer. Residues 116-128 (NTIFFYLKIRVKK) lie on the Cytoplasmic side of the membrane. A helical membrane pass occupies residues 129–149 (VMTGTLIMFLLLLGLNIIVIN). The Extracellular portion of the chain corresponds to 150 to 183 (ASKTILIPEYKVNMSNSLNLKNTQISMLFPFANT). N162 carries an N-linked (GlcNAc...) asparagine glycan. The chain crosses the membrane as a helical span at residues 184 to 204 (LFGFIPFAVSLVTFLLLFFSL). The Cytoplasmic segment spans residues 205–236 (WKHQRKMHHGAQGCRDSSTKAHIRVLQTLIAS). Residues 237–257 (ILLYFVFFLSLVVKVWISLFL) traverse the membrane as a helical segment. Residues 258-261 (ERML) are Extracellular-facing. The helical transmembrane segment at 262 to 282 (LLLITQAAKIAFPSLHPWVLI) threads the bilayer. The Cytoplasmic portion of the chain corresponds to 283–324 (LGNAKLRKASLSALQWLRCRHKDEHRRVQRPEVHSCGSSCMP).

It belongs to the G-protein coupled receptor T2R family.

It localises to the membrane. Functionally, putative taste receptor which may play a role in the perception of bitterness. The polypeptide is Taste receptor type 2 member 116 (Rattus norvegicus (Rat)).